A 178-amino-acid chain; its full sequence is ATP synthase subunit delta (178 aa).

It belongs to the ATPase delta chain family. As to quaternary structure, F-type ATPases have 2 components, F(1) - the catalytic core - and F(0) - the membrane proton channel. F(1) has five subunits: alpha(3), beta(3), gamma(1), delta(1), epsilon(1). F(0) has three main subunits: a(1), b(2) and c(10-14). The alpha and beta chains form an alternating ring which encloses part of the gamma chain. F(1) is attached to F(0) by a central stalk formed by the gamma and epsilon chains, while a peripheral stalk is formed by the delta and b chains.

The protein localises to the cell inner membrane. Its function is as follows. F(1)F(0) ATP synthase produces ATP from ADP in the presence of a proton or sodium gradient. F-type ATPases consist of two structural domains, F(1) containing the extramembraneous catalytic core and F(0) containing the membrane proton channel, linked together by a central stalk and a peripheral stalk. During catalysis, ATP synthesis in the catalytic domain of F(1) is coupled via a rotary mechanism of the central stalk subunits to proton translocation. This protein is part of the stalk that links CF(0) to CF(1). It either transmits conformational changes from CF(0) to CF(1) or is implicated in proton conduction. The protein is ATP synthase subunit delta of Acinetobacter baumannii (strain AB307-0294).